Here is an 865-residue protein sequence, read N- to C-terminus: AP-1 complex subunit gamma-1 (865 aa).

The interval 665 to 690 (AEPLETPVDEMTQSPQSSLSRAPSTS) is disordered. Over residues 675–690 (MTQSPQSSLSRAPSTS) the composition is skewed to polar residues. The GAE domain maps to 746–860 (KSYPPIVVFD…LDQVDFGKLP (115 aa)).

This sequence belongs to the adaptor complexes large subunit family. As to quaternary structure, adaptor protein complex 1 (AP-1) is a heterotetramer composed of two large adaptins (gamma-type subunit apl4 and beta-type subunit apl2), a medium adaptin (mu-type subunit apm1) and a small adaptin (sigma-type subunit aps1). AP-1 interacts with clathrin.

Its subcellular location is the cytoplasmic vesicle. It is found in the clathrin-coated vesicle membrane. It localises to the golgi apparatus. Its function is as follows. Adaptins are components of the adaptor complexes which link clathrin to receptors in coated vesicles. Clathrin-associated protein complexes are believed to interact with the cytoplasmic tails of membrane proteins, leading to their selection and concentration. The AP-1 complex interacts directly with clathrin. This Schizosaccharomyces pombe (strain 972 / ATCC 24843) (Fission yeast) protein is AP-1 complex subunit gamma-1 (apl4).